The following is a 166-amino-acid chain: Co-chaperone protein HscB homolog (166 aa).

The J domain occupies 3–75 (QYFTLFRIEP…IDRAAYLLKT (73 aa)).

The protein belongs to the HscB family. Interacts with HscA and stimulates its ATPase activity.

Functionally, co-chaperone involved in the maturation of iron-sulfur cluster-containing proteins. Seems to help targeting proteins to be folded toward HscA. This chain is Co-chaperone protein HscB homolog, found in Neisseria meningitidis serogroup C (strain 053442).